The primary structure comprises 726 residues: Delta-1-pyrroline-5-carboxylate synthase B (726 aa).

The segment at M1 to R296 is glutamate 5-kinase. Positions 60, 157, and 176 each coordinate substrate. Residues S196–D197 and R236–K242 each bind ATP. The gamma-glutamyl phosphate reductase stretch occupies residues D297 to Q717.

It in the N-terminal section; belongs to the glutamate 5-kinase family. In the C-terminal section; belongs to the gamma-glutamyl phosphate reductase family.

The catalysed reaction is L-glutamate + ATP = L-glutamyl 5-phosphate + ADP. It catalyses the reaction L-glutamate 5-semialdehyde + phosphate + NADP(+) = L-glutamyl 5-phosphate + NADPH + H(+). Its pathway is amino-acid biosynthesis; L-proline biosynthesis; L-glutamate 5-semialdehyde from L-glutamate: step 1/2. It participates in amino-acid biosynthesis; L-proline biosynthesis; L-glutamate 5-semialdehyde from L-glutamate: step 2/2. Functionally, P5CS plays a key role in proline biosynthesis, leading to osmoregulation in plants. The polypeptide is Delta-1-pyrroline-5-carboxylate synthase B (P5CSB) (Arabidopsis thaliana (Mouse-ear cress)).